We begin with the raw amino-acid sequence, 89 residues long: Large ribosomal subunit protein eL43 (89 aa).

Zn(2+) contacts are provided by cysteine 38, cysteine 41, cysteine 56, and cysteine 59. Residues 38–59 (CPVCHKRAVKRVGTGIWRCTKC) form a C4-type zinc finger.

Belongs to the eukaryotic ribosomal protein eL43 family. Putative zinc-binding subfamily. In terms of assembly, part of the 50S ribosomal subunit. The cofactor is Zn(2+).

Binds to the 23S rRNA. The protein is Large ribosomal subunit protein eL43 of Methanopyrus kandleri (strain AV19 / DSM 6324 / JCM 9639 / NBRC 100938).